The primary structure comprises 104 residues: MGIDPNYRQNRQVVGEHEGHKIYGPVEPPGKLGIHGTIVGVDFDVCIADGSCINACPVNVFQWFDTPGHPASEKKADPINEKACIFCMACVNVCPVAAIDVKPP.

The interval 2–37 (GIDPNYRQNRQVVGEHEGHKIYGPVEPPGKLGIHGT) is N-terminal extension. Zn(2+)-binding residues include histidine 17, histidine 20, and histidine 35. 4Fe-4S ferredoxin-type domains follow at residues 38 to 66 (IVGV…WFDT) and 75 to 104 (KADP…VKPP). The [3Fe-4S] cluster site is built by cysteine 46 and cysteine 52. Residue cysteine 56 coordinates [4Fe-4S] cluster. Residue aspartate 77 coordinates Zn(2+). Cysteine 84, cysteine 87, and cysteine 90 together coordinate [4Fe-4S] cluster. A [3Fe-4S] cluster-binding site is contributed by cysteine 94.

Requires [3Fe-4S] cluster as cofactor. [4Fe-4S] cluster serves as cofactor. Zn(2+) is required as a cofactor.

Functionally, ferredoxins are iron-sulfur proteins that transfer electrons in a wide variety of metabolic reactions. The chain is Zinc-containing ferredoxin-2 (zfx2) from Sulfurisphaera tokodaii (strain DSM 16993 / JCM 10545 / NBRC 100140 / 7) (Sulfolobus tokodaii).